A 220-amino-acid polypeptide reads, in one-letter code: Deoxyribose-phosphate aldolase (220 aa).

Asp89 functions as the Proton donor/acceptor in the catalytic mechanism. The Schiff-base intermediate with acetaldehyde role is filled by Lys151. Lys180 acts as the Proton donor/acceptor in catalysis.

It belongs to the DeoC/FbaB aldolase family. DeoC type 1 subfamily.

Its subcellular location is the cytoplasm. It catalyses the reaction 2-deoxy-D-ribose 5-phosphate = D-glyceraldehyde 3-phosphate + acetaldehyde. It participates in carbohydrate degradation; 2-deoxy-D-ribose 1-phosphate degradation; D-glyceraldehyde 3-phosphate and acetaldehyde from 2-deoxy-alpha-D-ribose 1-phosphate: step 2/2. Functionally, catalyzes a reversible aldol reaction between acetaldehyde and D-glyceraldehyde 3-phosphate to generate 2-deoxy-D-ribose 5-phosphate. This chain is Deoxyribose-phosphate aldolase, found in Macrococcus caseolyticus (strain JCSC5402) (Macrococcoides caseolyticum).